The sequence spans 312 residues: Malate dehydrogenase (312 aa).

NAD(+) contacts are provided by residues 7-13 (GAAGGIG) and Asp34. Substrate contacts are provided by Arg81 and Arg87. Residues Asn94 and 117–119 (ITN) contribute to the NAD(+) site. Substrate is bound by residues Asn119 and Arg153. Residue His177 is the Proton acceptor of the active site. NAD(+) is bound at residue Met227.

The protein belongs to the LDH/MDH superfamily. MDH type 1 family. Homodimer.

It carries out the reaction (S)-malate + NAD(+) = oxaloacetate + NADH + H(+). Functionally, catalyzes the reversible oxidation of malate to oxaloacetate. The polypeptide is Malate dehydrogenase (Cronobacter sakazakii (strain ATCC BAA-894) (Enterobacter sakazakii)).